Reading from the N-terminus, the 59-residue chain is Crassipeptide cce9a (59 aa).

The propeptide occupies 1 to 30; the sequence is ADNHARVAGPRAVASGRYATEKAFLQMMTR.

Post-translationally, contains 3 disulfide bonds. In terms of tissue distribution, expressed by the venom duct.

The protein resides in the secreted. Crassispirid snail peptide that induces sleep-like symptoms in young mice (12 and 14 days) and hyperactivity in older mice (16 days), when intracranially injected. The protein is Crassipeptide cce9a of Crassispira cerithina (Sea snail).